The sequence spans 154 residues: Nucleoside diphosphate kinase (154 aa).

ATP-binding residues include Lys12, Phe60, Arg88, Thr94, Arg105, and Asn115. His118 acts as the Pros-phosphohistidine intermediate in catalysis.

It belongs to the NDK family. It depends on Mg(2+) as a cofactor.

The protein resides in the cytoplasm. It carries out the reaction a 2'-deoxyribonucleoside 5'-diphosphate + ATP = a 2'-deoxyribonucleoside 5'-triphosphate + ADP. The catalysed reaction is a ribonucleoside 5'-diphosphate + ATP = a ribonucleoside 5'-triphosphate + ADP. Major role in the synthesis of nucleoside triphosphates other than ATP. The ATP gamma phosphate is transferred to the NDP beta phosphate via a ping-pong mechanism, using a phosphorylated active-site intermediate. This chain is Nucleoside diphosphate kinase, found in Haloarcula marismortui (strain ATCC 43049 / DSM 3752 / JCM 8966 / VKM B-1809) (Halobacterium marismortui).